We begin with the raw amino-acid sequence, 53 residues long: Large ribosomal subunit protein eL24 (53 aa).

The Zn(2+) site is built by C4, C7, C30, and C34. A C4-type zinc finger spans residues 4 to 34 (CSFCNKEIEEGTGKMYVKKDGSIYFFCSSKC).

It belongs to the eukaryotic ribosomal protein eL24 family. Part of the 50S ribosomal subunit. Forms a cluster with proteins L3 and L14. It depends on Zn(2+) as a cofactor.

Binds to the 23S rRNA. The chain is Large ribosomal subunit protein eL24 from Methanobrevibacter smithii (strain ATCC 35061 / DSM 861 / OCM 144 / PS).